Reading from the N-terminus, the 191-residue chain is Inosine triphosphate pyrophosphatase (191 aa).

Residue 12–17 (TGNKNK) coordinates ITP. Residue Glu40 coordinates Mg(2+). Residues Lys52, 68–69 (DS), Lys85, 144–147 (FGWE), Lys167, and 172–173 (HR) each bind ITP.

This sequence belongs to the HAM1 NTPase family. Homodimer. The cofactor is Mg(2+). It depends on Mn(2+) as a cofactor.

It localises to the cytoplasm. Its subcellular location is the nucleus. The catalysed reaction is ITP + H2O = IMP + diphosphate + H(+). It carries out the reaction dITP + H2O = dIMP + diphosphate + H(+). It catalyses the reaction XTP + H2O = XMP + diphosphate + H(+). Functionally, pyrophosphatase that hydrolyzes non-canonical purine nucleotides such as inosine triphosphate (ITP), deoxyinosine triphosphate (dITP) or xanthosine 5'-triphosphate (XTP) to their respective monophosphate derivatives. The enzyme does not distinguish between the deoxy- and ribose forms. Probably excludes non-canonical purines from RNA and DNA precursor pools, thus preventing their incorporation into RNA and DNA and avoiding chromosomal lesions. The chain is Inosine triphosphate pyrophosphatase from Aspergillus oryzae (strain ATCC 42149 / RIB 40) (Yellow koji mold).